The primary structure comprises 422 residues: L-threonine dehydratase biosynthetic IlvA (422 aa).

Lys-60 is subject to N6-(pyridoxal phosphate)lysine. Residues Asn-87, 190-194, and Ser-315 each bind pyridoxal 5'-phosphate; that span reads GGGGL. The region spanning 339–413 is the ACT-like domain; it reads HYFIVNFPQR…KPFHYVEVNK (75 aa).

Belongs to the serine/threonine dehydratase family. Homotetramer. It depends on pyridoxal 5'-phosphate as a cofactor.

The enzyme catalyses L-threonine = 2-oxobutanoate + NH4(+). Its pathway is amino-acid biosynthesis; L-isoleucine biosynthesis; 2-oxobutanoate from L-threonine: step 1/1. Its function is as follows. Catalyzes the anaerobic formation of alpha-ketobutyrate and ammonia from threonine in a two-step reaction. The first step involved a dehydration of threonine and a production of enamine intermediates (aminocrotonate), which tautomerizes to its imine form (iminobutyrate). Both intermediates are unstable and short-lived. The second step is the nonenzymatic hydrolysis of the enamine/imine intermediates to form 2-ketobutyrate and free ammonia. In the low water environment of the cell, the second step is accelerated by RidA. The chain is L-threonine dehydratase biosynthetic IlvA (ilvA) from Bacillus subtilis (strain 168).